The primary structure comprises 511 residues: Histidine ammonia-lyase 2 (511 aa).

A cross-link (5-imidazolinone (Ser-Gly)) is located at residues 144–146; the sequence is SSG. S145 is subject to 2,3-didehydroalanine (Ser).

It belongs to the PAL/histidase family. Contains an active site 4-methylidene-imidazol-5-one (MIO), which is formed autocatalytically by cyclization and dehydration of residues Ser-Ser-Gly.

The protein resides in the cytoplasm. The catalysed reaction is L-histidine = trans-urocanate + NH4(+). It functions in the pathway amino-acid degradation; L-histidine degradation into L-glutamate; N-formimidoyl-L-glutamate from L-histidine: step 1/3. This is Histidine ammonia-lyase 2 (hutH2) from Fusobacterium nucleatum subsp. nucleatum (strain ATCC 25586 / DSM 15643 / BCRC 10681 / CIP 101130 / JCM 8532 / KCTC 2640 / LMG 13131 / VPI 4355).